We begin with the raw amino-acid sequence, 561 residues long: Putative transport protein CKO_02260 (561 aa).

A run of 5 helical transmembrane segments spans residues 8-28 (LLNG…LCLG), 32-52 (LGSV…LLGQ), 66-86 (FMLF…SIFF), 94-114 (MLAL…GKLF), and 158-178 (NLSL…IVGA). RCK C-terminal domains are found at residues 200-288 (RGLD…SFRN) and 292-373 (VFDR…RIGF). The next 5 membrane-spanning stretches (helical) occupy residues 383-403 (LLAF…TFQF), 406-426 (FSFG…LGFL), 447-467 (FGLM…IGNG), 475-495 (MLIA…LFGA), and 540-560 (AIAN…WPGL).

The protein belongs to the AAE transporter (TC 2.A.81) family. YbjL subfamily.

Its subcellular location is the cell membrane. This is Putative transport protein CKO_02260 from Citrobacter koseri (strain ATCC BAA-895 / CDC 4225-83 / SGSC4696).